Reading from the N-terminus, the 381-residue chain is Succinyl-diaminopimelate desuccinylase (381 aa).

His72 provides a ligand contact to Zn(2+). Residue Asp74 is part of the active site. Residue Asp105 participates in Zn(2+) binding. Glu139 serves as the catalytic Proton acceptor. Zn(2+)-binding residues include Glu140, Glu168, and His354.

This sequence belongs to the peptidase M20A family. DapE subfamily. In terms of assembly, homodimer. Requires Zn(2+) as cofactor. The cofactor is Co(2+).

The enzyme catalyses N-succinyl-(2S,6S)-2,6-diaminopimelate + H2O = (2S,6S)-2,6-diaminopimelate + succinate. It participates in amino-acid biosynthesis; L-lysine biosynthesis via DAP pathway; LL-2,6-diaminopimelate from (S)-tetrahydrodipicolinate (succinylase route): step 3/3. Catalyzes the hydrolysis of N-succinyl-L,L-diaminopimelic acid (SDAP), forming succinate and LL-2,6-diaminopimelate (DAP), an intermediate involved in the bacterial biosynthesis of lysine and meso-diaminopimelic acid, an essential component of bacterial cell walls. This is Succinyl-diaminopimelate desuccinylase from Shewanella sp. (strain ANA-3).